The following is a 297-amino-acid chain: Bifunctional protein FolD 1 (297 aa).

NADP(+) is bound by residues 164-166 (GRS) and Thr-230.

The protein belongs to the tetrahydrofolate dehydrogenase/cyclohydrolase family. In terms of assembly, homodimer.

The catalysed reaction is (6R)-5,10-methylene-5,6,7,8-tetrahydrofolate + NADP(+) = (6R)-5,10-methenyltetrahydrofolate + NADPH. It carries out the reaction (6R)-5,10-methenyltetrahydrofolate + H2O = (6R)-10-formyltetrahydrofolate + H(+). It functions in the pathway one-carbon metabolism; tetrahydrofolate interconversion. Functionally, catalyzes the oxidation of 5,10-methylenetetrahydrofolate to 5,10-methenyltetrahydrofolate and then the hydrolysis of 5,10-methenyltetrahydrofolate to 10-formyltetrahydrofolate. The sequence is that of Bifunctional protein FolD 1 from Rhodococcus jostii (strain RHA1).